The sequence spans 158 residues: Small ribosomal subunit protein uS7 (158 aa).

Belongs to the universal ribosomal protein uS7 family. Part of the 30S ribosomal subunit. Contacts proteins S9 and S11.

Its function is as follows. One of the primary rRNA binding proteins, it binds directly to 16S rRNA where it nucleates assembly of the head domain of the 30S subunit. Is located at the subunit interface close to the decoding center, probably blocks exit of the E-site tRNA. In Parabacteroides distasonis (strain ATCC 8503 / DSM 20701 / CIP 104284 / JCM 5825 / NCTC 11152), this protein is Small ribosomal subunit protein uS7.